We begin with the raw amino-acid sequence, 424 residues long: Hemagglutinin-esterase (424 aa).

Residues 1–16 (MFLLPRFVLVSCIIGS) form the signal peptide. Residues 7 to 127 (FVLVSCIIGS…SNDIWMQNKG (121 aa)) form an esterase domain 1 region. Over 17–392 (LGFDNPPTNV…PICVYDPLPI (376 aa)) the chain is Virion surface. The Nucleophile role is filled by Ser-40. Cys-44 and Cys-65 form a disulfide bridge. N-linked (GlcNAc...) asparagine; by host glycosylation is found at Asn-54, Asn-89, Asn-153, Asn-236, and Asn-301. Cystine bridges form between Cys-113–Cys-162, Cys-197–Cys-276, and Cys-205–Cys-249. The receptor binding stretch occupies residues 128 to 266 (LFYTQVYKNM…GNYLAISNEL (139 aa)). An esterase domain 2 region spans residues 267-379 (LLTVPTKAIC…RCPTAADINT (113 aa)). Cys-307 and Cys-312 form a disulfide bridge. Asn-316 is a glycosylation site (N-linked (GlcNAc...) asparagine; by host). Active-site charge relay system residues include Asp-326 and His-329. Cys-347 and Cys-371 are oxidised to a cystine. N-linked (GlcNAc...) asparagine; by host glycosylation is present at Asn-358. A helical membrane pass occupies residues 393-413 (IFLGILLGVAVIIIVVLLLYF). Over 414-424 (MVDNGTRLHDA) the chain is Intravirion. A glycan (N-linked (GlcNAc...) asparagine; by host) is linked at Asn-417.

It belongs to the influenza type C/coronaviruses hemagglutinin-esterase family. In terms of assembly, homodimer; disulfide-linked. Forms a complex with the M protein in the pre-Golgi. Associates then with S-M complex to form a ternary complex S-M-HE. N-glycosylated in the host RER.

It localises to the virion membrane. The protein resides in the host cell membrane. The catalysed reaction is N-acetyl-9-O-acetylneuraminate + H2O = N-acetylneuraminate + acetate + H(+). It catalyses the reaction N-acetyl-4-O-acetylneuraminate + H2O = N-acetylneuraminate + acetate + H(+). Its function is as follows. Structural protein that makes short spikes at the surface of the virus. Contains receptor binding and receptor-destroying activities. Mediates de-O-acetylation of N-acetyl-4-O-acetylneuraminic acid, which is probably the receptor determinant recognized by the virus on the surface of erythrocytes and susceptible cells. This receptor-destroying activity is important for virus release as it probably helps preventing self-aggregation and ensures the efficient spread of the progeny virus from cell to cell. May serve as a secondary viral attachment protein for initiating infection, the spike protein being the major one. May become a target for both the humoral and the cellular branches of the immune system. In Bovine coronavirus (strain Ontario) (BCoV), this protein is Hemagglutinin-esterase.